The primary structure comprises 237 residues: Ribosomal RNA small subunit methyltransferase G (237 aa).

S-adenosyl-L-methionine-binding positions include G78, F83, 129-130, and R148; that span reads AE.

It belongs to the methyltransferase superfamily. RNA methyltransferase RsmG family.

It is found in the cytoplasm. Functionally, specifically methylates the N7 position of a guanine in 16S rRNA. The polypeptide is Ribosomal RNA small subunit methyltransferase G (Streptococcus pyogenes serotype M3 (strain ATCC BAA-595 / MGAS315)).